A 394-amino-acid chain; its full sequence is UPF0284 protein SYNW1869 (394 aa).

It belongs to the UPF0284 family.

This Parasynechococcus marenigrum (strain WH8102) protein is UPF0284 protein SYNW1869.